The following is a 1279-amino-acid chain: Mediator of DNA damage checkpoint protein 1 (1279 aa).

Positions 1–22 are disordered; the sequence is MENTQVIDWDAEEEEETEISSG. The interval 1 to 150 is interaction with CHEK2; sequence MENTQVIDWD…PRSLLTIEKT (150 aa). The interaction with the MRN complex stretch occupies residues 2–222; the sequence is ENTQVIDWDA…SSPFGLGSDT (221 aa). The residue at position 4 (T4) is a Phosphothreonine. Residues 9–18 are compositionally biased toward acidic residues; it reads WDAEEEEETE. The FHA domain maps to 54–105; that stretch reads NVVGRSPDCSVALPFPSISKQHAVIEISAWNKAPILQDCGSLNGTQIVKPPR. A Phosphothreonine modification is found at T146. 3 disordered regions span residues 156–394, 409–634, and 714–744; these read RSQN…EEVS, LWSG…KHAK, and ETSE…PVPT. A phosphoserine mark is found at S168 and S176. Over residues 179–192 the composition is skewed to polar residues; the sequence is SVANGSRNTASPSA. S198 and S220 each carry phosphoserine. Phosphothreonine is present on T222. Basic and acidic residues predominate over residues 264–277; that stretch reads TKDKFKDTKMKEEA. Residues 278–292 are compositionally biased toward low complexity; sequence GSAGVPVGSVVEGSP. At S298 the chain carries Phosphoserine. At T300 the chain carries Phosphothreonine. At S314 the chain carries Phosphoserine. The residue at position 316 (T316) is a Phosphothreonine. Phosphoserine occurs at positions 350 and 354. At T356 the chain carries Phosphothreonine. A phosphoserine mark is found at S372 and S380. Acidic residues predominate over residues 381-393; that stretch reads DTDEEERGEEEEV. The residue at position 382 (T382) is a Phosphothreonine. Residues S394, S411, S421, S434, and S438 each carry the phosphoserine modification. Positions 421–435 are enriched in polar residues; sequence SQPQVLVERSQSASG. At T440 the chain carries Phosphothreonine. S457 is modified (phosphoserine). The residue at position 466 (T466) is a Phosphothreonine. 5 positions are modified to phosphoserine: S488, S489, S550, S587, and S589. Residues 545-561 are compositionally biased toward polar residues; that stretch reads QEGSSSPVADIRMSQQP. Over residues 620 to 634 the composition is skewed to basic and acidic residues; that stretch reads GREREAHVGGTKHAK. A phosphoserine mark is found at S730 and S745. An N6-acetyllysine modification is found at K764. The tract at residues 772 to 1086 is disordered; sequence QMMPDGKASG…TKPNQEAAAP (315 aa). Phosphoserine occurs at positions 793, 801, and 824. Residues 798–817 show a composition bias toward low complexity; the sequence is ASASPQSLLTSQSQKQSTPQ. Polar residues-rich tracts occupy residues 862-889, 901-929, and 942-956; these read TCPT…STRT, QPST…TSVN, and PLTS…NLNP. T889 bears the Phosphothreonine mark. A Phosphothreonine modification is found at T951. K991 participates in a covalent cross-link: Glycyl lysine isopeptide (Lys-Gly) (interchain with G-Cter in SUMO2). Low complexity predominate over residues 994 to 1014; the sequence is STPAEPEPQSSASQSSGASEA. S1008, S1009, S1012, and S1016 each carry phosphoserine. Residues 1032 to 1047 are compositionally biased toward basic and acidic residues; it reads VVKEEDPGEIQVKEEP. A Glycyl lysine isopeptide (Lys-Gly) (interchain with G-Cter in SUMO1); alternate cross-link involves residue K1034. A Glycyl lysine isopeptide (Lys-Gly) (interchain with G-Cter in SUMO2); alternate cross-link involves residue K1034. T1054 is modified (phosphothreonine). 2 consecutive BRCT domains span residues 1085 to 1163 and 1184 to 1275; these read APKV…DYLV and RERR…FVLS.

As to quaternary structure, homodimer. Interacts with H2AX, which requires phosphorylation of H2AX on 'Ser-139'. Interacts with the MRN complex, composed of MRE11, RAD50, and NBN. Interacts with CHEK2, which requires ATM-mediated phosphorylation of 'Thr-68' within the FHA domain of CHEK2. Interacts constitutively with the BRCA1-BARD1 complex, SMC1A and TP53BP1. Interacts with ATM and FANCD2, and these interactions are reduced upon DNA damage. Also interacts with the PRKDC complex, composed of XRCC6/KU70, XRCC5/KU80 and PRKDC/XRCC7. This interaction may be required for PRKDC autophosphorylation, which is essential for DNA double strand break (DSB) repair. When phosphorylated by ATM, interacts with RNF8 (via FHA domain). Interacts with CEP164. When phosphorylated, interacts with APTX (via FHA-like domain). Interacts (when phosphorylated) with TOPBP1; promoting TOPBP1 localization to DNA damage sites during mitosis. Interacts (when phosphorylated) with NBN; promoting NBN and MRN complex localization to DNA damage sites. Post-translationally, phosphorylated upon exposure to ionizing radiation (IR), ultraviolet radiation (UV), and hydroxyurea (HU). Phosphorylation in response to IR requires ATM, NBN, and possibly CHEK2. Also phosphorylated during the G2/M phase of the cell cycle and during activation of the mitotic spindle checkpoint. Phosphorylation at Thr-4 by ATM stabilizes and enhances homodimerization via the FHA domain. Phosphorylated at Ser-168 and Ser-198 by CK2 in response to DNA damage during mitosis, promoting interaction with TOPBP1. Phosphorylated by CK2 in response to DNA damage, promoting interaction with NBN and recruitment of the MRN complex to DNA damage sites. In terms of processing, sumoylation at Lys-1034 by PIAS4 following DNA damage promotes ubiquitin-mediated degradation. Ubiquitinated by RNF4, leading to proteasomal degradation; undergoes 'Lys-48'-linked polyubiquitination.

The protein resides in the nucleus. Its subcellular location is the chromosome. Histone reader protein required for checkpoint-mediated cell cycle arrest in response to DNA damage within both the S phase and G2/M phases of the cell cycle. Specifically recognizes and binds histone H2AX phosphorylated at 'Ser-139', a marker of DNA damage, serving as a scaffold for the recruitment of DNA repair and signal transduction proteins to discrete foci of DNA damage sites. Also required for downstream events subsequent to the recruitment of these proteins. These include phosphorylation and activation of the ATM, CHEK1 and CHEK2 kinases, and stabilization of TP53/p53 and apoptosis. ATM and CHEK2 may also be activated independently by a parallel pathway mediated by TP53BP1. Required for chromosomal stability during mitosis by promoting recruitment of TOPBP1 to DNA double strand breaks (DSBs): TOPBP1 forms filamentous assemblies that bridge MDC1 and tether broken chromosomes during mitosis. Required for the repair of DSBs via homologous recombination by promoting recruitment of NBN component of the MRN complex to DSBs. The protein is Mediator of DNA damage checkpoint protein 1 (Mdc1) of Rattus norvegicus (Rat).